The chain runs to 35 residues: uncharacterized protein (35 aa).

A helical transmembrane segment spans residues 10-30 (LMITASFFAIFIIIVVSVLLL).

It localises to the membrane. This is an uncharacterized protein from Salmonella typhimurium (strain LT2 / SGSC1412 / ATCC 700720).